We begin with the raw amino-acid sequence, 554 residues long: Arginine--tRNA ligase (554 aa).

The short motif at A130–H140 is the 'HIGH' region element.

The protein belongs to the class-I aminoacyl-tRNA synthetase family. In terms of assembly, monomer.

It localises to the cytoplasm. It carries out the reaction tRNA(Arg) + L-arginine + ATP = L-arginyl-tRNA(Arg) + AMP + diphosphate. In Staphylococcus carnosus (strain TM300), this protein is Arginine--tRNA ligase.